The chain runs to 474 residues: Dihydrolipoyl dehydrogenase (474 aa).

FAD-binding positions include 36–45, lysine 54, and glycine 117; that span reads ERYNTLGGVC. Cysteine 45 and cysteine 50 are joined by a disulfide. NAD(+) is bound by residues 182 to 186 and glutamate 205; that span reads GGGII. Lysine 220 carries the post-translational modification N6-acetyllysine. NAD(+)-binding positions include valine 238 and 270–273; that span reads AIGR. FAD contacts are provided by aspartate 313 and alanine 321. The Proton acceptor role is filled by histidine 445.

Belongs to the class-I pyridine nucleotide-disulfide oxidoreductase family. As to quaternary structure, homodimer. It depends on FAD as a cofactor.

The protein localises to the cytoplasm. The enzyme catalyses N(6)-[(R)-dihydrolipoyl]-L-lysyl-[protein] + NAD(+) = N(6)-[(R)-lipoyl]-L-lysyl-[protein] + NADH + H(+). Lipoamide dehydrogenase is a component of the glycine cleavage system as well as of the alpha-ketoacid dehydrogenase complexes. The protein is Dihydrolipoyl dehydrogenase (lpdA) of Shigella flexneri.